A 411-amino-acid chain; its full sequence is E3 ubiquitin-protein ligase PUB23 (411 aa).

The U-box domain maps to 11 to 86 (EIPPFFLCPI…QSWCTLNASY (76 aa)). ARM repeat units lie at residues 132–173 (ATNK…HLET), 175–203 (ETVLKNLLNNKKDNNIVKSLTKIMQRGMY), 221–261 (DPMQ…NICP), and 263–306 (GRNR…LLCQ).

In terms of assembly, interacts with RPN12A. Auto-ubiquitinated.

It localises to the cytoplasm. It catalyses the reaction S-ubiquitinyl-[E2 ubiquitin-conjugating enzyme]-L-cysteine + [acceptor protein]-L-lysine = [E2 ubiquitin-conjugating enzyme]-L-cysteine + N(6)-ubiquitinyl-[acceptor protein]-L-lysine.. The protein operates within protein modification; protein ubiquitination. E3 ubiquitin-protein ligase that negatively regulates water stress response. May control in coordination with PUB23 a drought signaling pathway by ubiquitinating cytosolic RPN12a. Acts as a negative regulator of the immunity triggered by the pathogen-associated molecular patterns (PAMPs), in association with PUB22 and PUB24. This Arabidopsis thaliana (Mouse-ear cress) protein is E3 ubiquitin-protein ligase PUB23 (PUB23).